A 576-amino-acid polypeptide reads, in one-letter code: Vesicular glutamate transporter 1 (576 aa).

Over 1–63 (MEFRKEEFKK…CTCFGLPRRY (63 aa)) the chain is Cytoplasmic. A helical transmembrane segment spans residues 64-84 (IIAIMSGLGFCISFGIRCNLG). Residues 85-116 (VAIVSMVNNNTVYKGNKLVIEQAQFNWDPETV) lie on the Vesicular side of the membrane. Asn-93 carries an N-linked (GlcNAc...) asparagine glycan. The chain crosses the membrane as a helical span at residues 117-137 (GMIHGSFFWGYIVTQIPGGYI). Residues 138–140 (CQK) are Cytoplasmic-facing. The helical transmembrane segment at 141-161 (FAANRVFGFAIVATSTLNMLI) threads the bilayer. The Vesicular segment spans residues 162-168 (PSAARVH). The chain crosses the membrane as a helical span at residues 169 to 189 (FACVICVRILQGLVEGVTYPA). Residues 190-208 (CHGIWSKWAPPLERSRLAT) lie on the Cytoplasmic side of the membrane. A helical membrane pass occupies residues 209 to 229 (TAFCGSYAGAVVAMPLAGVLV). Residues 230–236 (QYSGWSS) lie on the Vesicular side of the membrane. Residues 237–257 (VFYVYGSFGITWYMFWILVSY) form a helical membrane-spanning segment. Residues 258-297 (ESPAQHPTISEEERKYIEESIGESTGFMNPMAKFKAPWRK) lie on the Cytoplasmic side of the membrane. The chain crosses the membrane as a helical span at residues 298-320 (FFTSMPVYAIIVANFCRSWTFYL). Over 321-341 (LLISQPAYFEEVFGFAISKVG) the chain is Vesicular. A helical transmembrane segment spans residues 342–362 (LLSALPHLVMTIIVPIGGQIA). Residues 363 to 378 (DFLRTKRIMSTTNVRK) are Cytoplasmic-facing. Residues 379 to 399 (MMNCGGFGMEATLLLVVGYSH) traverse the membrane as a helical segment. The Vesicular segment spans residues 400–401 (SR). Residues 402-422 (GVAISFLVLAVGFSGFAISGF) traverse the membrane as a helical segment. Over 423–435 (NVNHLDIAPRYAS) the chain is Cytoplasmic. The chain crosses the membrane as a helical span at residues 436 to 456 (ILMGISNGVGTLSGMVCPLIV). Residues 457-469 (GAMTKHKTREEWQ) are Vesicular-facing. A helical membrane pass occupies residues 470-490 (YVFLIASLVHYGGVVFYGIFA). Topologically, residues 491–576 (SGEKQPWAEP…YGTVAERDLS (86 aa)) are cytoplasmic. Residues 517-552 (ADESEEQTQAHGGYGSYGATQTTSQQNGGWATDWEK) form a disordered region. Residues 534–545 (GATQTTSQQNGG) show a composition bias toward polar residues.

The protein belongs to the major facilitator superfamily. Sodium/anion cotransporter family. VGLUT subfamily.

It localises to the cytoplasmic vesicle. Its subcellular location is the secretory vesicle. It is found in the synaptic vesicle membrane. The protein resides in the cell membrane. The protein localises to the synapse. It localises to the synaptosome. It catalyses the reaction L-glutamate(out) = L-glutamate(in). The catalysed reaction is chloride(in) = chloride(out). The enzyme catalyses 3 Na(+)(out) + phosphate(out) = 3 Na(+)(in) + phosphate(in). It carries out the reaction phosphate(in) = phosphate(out). It catalyses the reaction K(+)(in) + H(+)(out) = K(+)(out) + H(+)(in). Chloride channel activity is allosterically activated by lumenal H(+) and Cl(-) leading to synaptic vesicles acidification. The L-glutamate transport activity is allosterically activated by lumenal H(+) and Cl(-). The allosteric activation by H(+) efficiently prevents non-vesicular efflux across the plasma membrane, thereby restricting L-glutamate transport activity to acidic membranes such as synaptic vesicles. Multifunctional transporter that transports L-glutamate as well as multiple ions such as chloride, proton, potassium, sodium and phosphate. At the synaptic vesicle membrane, mainly functions as an uniporter which transports preferentially L-glutamate but also phosphate from the cytoplasm into synaptic vesicles at presynaptic nerve terminals of excitatory neural cells. The L-glutamate or phosphate uniporter activity is electrogenic and is driven by the proton electrochemical gradient, mainly by the electrical gradient established by the vacuolar H(+)-ATPase across the synaptic vesicle membrane. In addition, functions as a chloride channel that allows a chloride permeation through the synaptic vesicle membrane that affects the proton electrochemical gradient and promotes synaptic vesicles acidification. Moreover, may function as a K(+)/H(+) antiport allowing to maintain the electrical gradient and to decrease chemical gradient and therefore sustain vesicular glutamate uptake. The vesicular K(+)/H(+) antiport activity is electroneutral. At the plasma membrane, following exocytosis, functions as a symporter of Na(+) and phosphate from the extracellular space to the cytoplasm allowing synaptic phosphate homeostasis regulation. The symporter activity is driven by an inside negative membrane potential and is electrogenic. Is necessary for synaptic signaling of visual-evoked responses from photoreceptors. This chain is Vesicular glutamate transporter 1, found in Xenopus laevis (African clawed frog).